Reading from the N-terminus, the 354-residue chain is Uroporphyrinogen decarboxylase (354 aa).

Substrate-binding positions include 27 to 31 (RQAGR), D77, Y154, T209, and H327.

This sequence belongs to the uroporphyrinogen decarboxylase family. As to quaternary structure, homodimer.

It is found in the cytoplasm. The enzyme catalyses uroporphyrinogen III + 4 H(+) = coproporphyrinogen III + 4 CO2. Its pathway is porphyrin-containing compound metabolism; protoporphyrin-IX biosynthesis; coproporphyrinogen-III from 5-aminolevulinate: step 4/4. Its function is as follows. Catalyzes the decarboxylation of four acetate groups of uroporphyrinogen-III to yield coproporphyrinogen-III. This Sodalis glossinidius (strain morsitans) protein is Uroporphyrinogen decarboxylase.